Here is a 350-residue protein sequence, read N- to C-terminus: Protein-glutamate methylesterase/protein-glutamine glutaminase (350 aa).

The Response regulatory domain maps to 5-122; that stretch reads KVLCVDDSAL…RDGLIEYSEV (118 aa). Asp56 is modified (4-aspartylphosphate). The 195-residue stretch at 152-346 folds into the CheB-type methylesterase domain; sequence PFASSEKLVI…ERILTRLGDR (195 aa). Residues Ser165, His191, and Asp288 contribute to the active site.

Belongs to the CheB family. In terms of processing, phosphorylated by CheA. Phosphorylation of the N-terminal regulatory domain activates the methylesterase activity.

The protein resides in the cytoplasm. The enzyme catalyses [protein]-L-glutamate 5-O-methyl ester + H2O = L-glutamyl-[protein] + methanol + H(+). It carries out the reaction L-glutaminyl-[protein] + H2O = L-glutamyl-[protein] + NH4(+). Involved in chemotaxis. Part of a chemotaxis signal transduction system that modulates chemotaxis in response to various stimuli. Catalyzes the demethylation of specific methylglutamate residues introduced into the chemoreceptors (methyl-accepting chemotaxis proteins or MCP) by CheR. Also mediates the irreversible deamidation of specific glutamine residues to glutamic acid. The chain is Protein-glutamate methylesterase/protein-glutamine glutaminase from Bordetella bronchiseptica (strain ATCC BAA-588 / NCTC 13252 / RB50) (Alcaligenes bronchisepticus).